A 472-amino-acid chain; its full sequence is CAAX prenyl protease 1 homolog (472 aa).

Residues 1–8 lie on the Lumenal side of the membrane; the sequence is MDVGGALD. A helical transmembrane segment spans residues 9-29; sequence LYGCSVNVYNAILIFIWVLFL. Over 30–75 the chain is Cytoplasmic; it reads WETYINLRQLKVAKRVTESPEEIKCLMNDVDFDKSRRYAIDKMNFD. Residues 76-96 traverse the membrane as a helical segment; it reads IVSGFYNILSLSAVLYFQLIA. The Lumenal segment spans residues 97 to 124; sequence WAWHKSQEHMLFVCSYAPRSFGTTEGSE. Residues 125 to 145 traverse the membrane as a helical segment; it reads ILFSLLFTVYVALFQFFESLP. At 146-175 the chain is on the cytoplasmic side; sequence WSYYRHFVIEERYGFNKQTIGFFIKDRLKS. Residues 176–196 form a helical membrane-spanning segment; that stretch reads LAVGLVIGLPIISMLVWIIKA. The Lumenal portion of the chain corresponds to 197 to 207; sequence GGHYFYIYAYG. Residues 208–228 form a helical membrane-spanning segment; that stretch reads FTFVVSFIIMFIYPEFIAPIF. At 229 to 340 the chain is on the cytoplasmic side; the sequence is DRYEHFPDCE…LGHWKLKHMT (112 aa). His-329 contacts Zn(2+). Glu-330 is a catalytic residue. His-333 provides a ligand contact to Zn(2+). Residues 341–361 traverse the membrane as a helical segment; that stretch reads FNLIIAQINIFFMFFAFGQLI. At 362–382 the chain is on the lumenal side; the sequence is NVDQLFVDFGFPPSTAPILIR. Residues 383–403 form a helical membrane-spanning segment; sequence LIVVFQFIFMPYSSVLEFLMT. Residues 404-472 are Cytoplasmic-facing; that stretch reads MLSRKFEFQA…AIDAKMGKEK (69 aa). Glu-410 is a Zn(2+) binding site. Asp-414 (proton donor) is an active-site residue.

The protein belongs to the peptidase M48A family. In terms of assembly, homodimer; disulfide-linked. The cofactor is Zn(2+).

It is found in the endoplasmic reticulum membrane. It catalyses the reaction Hydrolyzes the peptide bond -P2-(S-farnesyl or geranylgeranyl)C-P1'-P2'-P3'-COOH where P1' and P2' are amino acids with aliphatic side chains and P3' is any C-terminal residue.. With respect to regulation, inhibited by ethylenediaminetetraacetic acid (EDTA) but not by serine, aspartic or cysteine protease inhibitors. Inhibited by high concentration of Zn(2+) (&gt; 0.1 mM). Its function is as follows. Zinc-dependent metalloproteinase. Proteolytically removes the C-terminal three residues of farnesylated proteins. This Taenia solium (Pork tapeworm) protein is CAAX prenyl protease 1 homolog.